Here is a 121-residue protein sequence, read N- to C-terminus: T cell receptor alpha variable 23/delta variable 6 (121 aa).

A signal peptide spans 1-21 (MDKILGASFLVLWLQLCWVSG). The region spanning 30–121 (QQVKQSPQSL…DSATYFCAAS (92 aa)) is the Ig-like domain. A disulfide bridge links C51 with C118. N-linked (GlcNAc...) asparagine glycosylation is present at N95.

In terms of assembly, alpha-beta TR is a heterodimer composed of an alpha and beta chain; disulfide-linked. The alpha-beta TR is associated with the transmembrane signaling CD3 coreceptor proteins to form the TR-CD3 (TcR or TCR). The assembly of alpha-beta TR heterodimers with CD3 occurs in the endoplasmic reticulum where a single alpha-beta TR heterodimer associates with one CD3D-CD3E heterodimer, one CD3G-CD3E heterodimer and one CD247 homodimer forming a stable octameric structure. CD3D-CD3E and CD3G-CD3E heterodimers preferentially associate with TR alpha and TR beta chains, respectively. The association of the CD247 homodimer is the last step of TcR assembly in the endoplasmic reticulum and is required for transport to the cell surface.

Its subcellular location is the cell membrane. V region of the variable domain of T cell receptor (TR) alpha chain that participates in the antigen recognition. Alpha-beta T cell receptors are antigen specific receptors which are essential to the immune response and are present on the cell surface of T lymphocytes. Recognize peptide-major histocompatibility (MH) (pMH) complexes that are displayed by antigen presenting cells (APC), a prerequisite for efficient T cell adaptive immunity against pathogens. Binding of alpha-beta TR to pMH complex initiates TR-CD3 clustering on the cell surface and intracellular activation of LCK that phosphorylates the ITAM motifs of CD3G, CD3D, CD3E and CD247 enabling the recruitment of ZAP70. In turn ZAP70 phosphorylates LAT, which recruits numerous signaling molecules to form the LAT signalosome. The LAT signalosome propagates signal branching to three major signaling pathways, the calcium, the mitogen-activated protein kinase (MAPK) kinase and the nuclear factor NF-kappa-B (NF-kB) pathways, leading to the mobilization of transcription factors that are critical for gene expression and essential for T cell growth and differentiation. The T cell repertoire is generated in the thymus, by V-(D)-J rearrangement. This repertoire is then shaped by intrathymic selection events to generate a peripheral T cell pool of self-MH restricted, non-autoaggressive T cells. Post-thymic interaction of alpha-beta TR with the pMH complexes shapes TR structural and functional avidity. In Homo sapiens (Human), this protein is T cell receptor alpha variable 23/delta variable 6.